The chain runs to 2812 residues: Serine/threonine-protein kinase tel1 (2812 aa).

One can recognise an FAT domain in the interval 1773 to 2347 (VAASTAYDCH…LHVLFSLVSN (575 aa)). One can recognise a PI3K/PI4K catalytic domain in the interval 2449–2758 (FDDTIHFASG…DASRDPKIQR (310 aa)). Residues 2455 to 2461 (FASGINA) are G-loop. The segment at 2627 to 2635 (GLGDRHGQN) is catalytic loop. Residues 2647–2671 (HIDLGIAFEQGKKLPVPECVPFRLT) form an activation loop region. Residues 2739–2749 (NQPESGNITTD) show a composition bias toward polar residues. Residues 2739-2763 (NQPESGNITTDASRDPKIQRNNVSG) are disordered. Residues 2780-2812 (STLSVEASVGELIRIAQDPSYLALMFCGWSAFQ) enclose the FATC domain.

It belongs to the PI3/PI4-kinase family. ATM subfamily. In terms of assembly, interacts with nbs1. This interaction is required for phosphorylation of histone H2A.

It localises to the nucleus. Its subcellular location is the chromosome. It is found in the telomere. The catalysed reaction is L-seryl-[protein] + ATP = O-phospho-L-seryl-[protein] + ADP + H(+). The enzyme catalyses L-threonyl-[protein] + ATP = O-phospho-L-threonyl-[protein] + ADP + H(+). Functionally, serine/threonine protein kinase which activates checkpoint signaling upon genotoxic stresses such as ionizing radiation (IR), ultraviolet light (UV), or DNA replication stalling, thereby acting as a DNA damage sensor. Recognizes the substrate consensus sequence [ST]-Q. Phosphorylates histone H2A to form H2AS128ph (gamma-H2A) at sites of DNA damage, involved in the regulation of DNA damage response mechanism. Undirectly involved in the phosphorylation of rad32 which is necessary for its telomere function. Required for the control of telomere length and genome stability. This is Serine/threonine-protein kinase tel1 (tel1) from Schizosaccharomyces pombe (strain 972 / ATCC 24843) (Fission yeast).